Reading from the N-terminus, the 256-residue chain is Cilia- and flagella-associated protein 410 (256 aa).

3 LRR repeats span residues 19–40, 41–62, and 63–84; these read SVRK…QEMP, SLEV…SRCQ, and RLSE…FYLK. The region spanning 97 to 137 is the LRRCT domain; sequence NPCCGTSPHRYRMTVLRTLPRLQKLDNQAVTEEELSRALSE. Disordered regions lie at residues 129 to 156 and 168 to 212; these read EELS…GGPK and AETG…SSHR. Residues serine 136 and serine 177 each carry the phosphoserine modification.

In terms of assembly, found in a complex with CFAP410, NEK1 and SPATA7. Interacts with NEK1. Widely expressed. Expressed in the retina.

The protein resides in the mitochondrion. It localises to the cytoplasm. The protein localises to the cytoskeleton. It is found in the cilium basal body. Its subcellular location is the cell projection. The protein resides in the cilium. It localises to the photoreceptor outer segment. Functionally, plays a role in cilia formation and/or maintenance. Plays a role in the regulation of cell morphology and cytoskeletal organization. Involved in DNA damage repair. This Homo sapiens (Human) protein is Cilia- and flagella-associated protein 410.